The sequence spans 890 residues: Calcium-transporting ATPase (890 aa).

At 1-47 the chain is on the cytoplasmic side; that stretch reads MKFHEMGQTDLLEATNTSMKQGLTEKEVKKRLDKHGPNELQEGKKTS. The chain crosses the membrane as a helical span at residues 48–68; it reads ALLLFFAQFKDFMVLVLLAAT. Residues 69 to 78 are Extracellular-facing; sequence LISGFLGEYV. A helical transmembrane segment spans residues 79 to 99; that stretch reads DAVAIIAIVFVNGILGFFQER. The Cytoplasmic segment spans residues 100-238; sequence RAEQSLQALK…TLSTPLQRRL (139 aa). The chain crosses the membrane as a helical span at residues 239-258; sequence EQLGKILIVVALLLTVLVVA. The Extracellular portion of the chain corresponds to 259–270; sequence VGVIQGHDLYSM. Residues 271-288 form a helical membrane-spanning segment; that stretch reads FLAGVSLAVAAIPEGLPA. 4 residues coordinate Ca(2+): Val-279, Ala-280, Ile-282, and Glu-284. Topologically, residues 289-688 are cytoplasmic; that stretch reads IVTVALSLGV…KEGRNIYENI (400 aa). Asp-326 serves as the catalytic 4-aspartylphosphate intermediate. The Mg(2+) site is built by Asp-633 and Asp-637. A helical membrane pass occupies residues 689–708; the sequence is RKFIRYLLASNVGEILVMLF. The Ca(2+) site is built by Asn-699 and Glu-702. The Extracellular segment spans residues 709–718; sequence AMLLALPLPL. A helical transmembrane segment spans residues 719-739; it reads VPIQILWVNLVTDGLPAMALG. Ca(2+) is bound by residues Asn-727, Thr-730, and Asp-731. Topologically, residues 740–759 are cytoplasmic; it reads MDQPEGDVMKRKPRHPKEGV. A helical membrane pass occupies residues 760–782; that stretch reads FARKLGWKVVSRGFLIGVATILA. Over 783–798 the chain is Extracellular; the sequence is FIIVYHRNPENLAYAQ. The chain crosses the membrane as a helical span at residues 799-818; that stretch reads TIAFATLVLAQLIHVFDCRS. Over 819–830 the chain is Cytoplasmic; sequence ETSVFSRNPFQN. The helical transmembrane segment at 831 to 849 threads the bilayer; that stretch reads LYLIGAVLSSILLMLVVIY. Over 850-864 the chain is Extracellular; sequence YPPLQPIFHTVAITP. A helical transmembrane segment spans residues 865 to 885; it reads GDWMLVIGMSAIPTFLLAGSL. Over 886–890 the chain is Cytoplasmic; it reads LTRKK.

It belongs to the cation transport ATPase (P-type) (TC 3.A.3) family. Type IIA subfamily. Phosphorylated in a Ca(2+)-dependent manner starting 4 hours after shifting to sporulation medium.

The protein resides in the cell membrane. The enzyme catalyses Ca(2+)(in) + ATP + H2O = Ca(2+)(out) + ADP + phosphate + H(+). Its function is as follows. This magnesium-dependent enzyme catalyzes the hydrolysis of ATP coupled with the transport of calcium. The protein is Calcium-transporting ATPase (yloB) of Bacillus subtilis (strain 168).